Reading from the N-terminus, the 577-residue chain is ABC transporter G family member 4 (577 aa).

The ABC transporter domain occupies 6–248 (LSTSSISYAK…LLSKGFTVPS (243 aa)). 48 to 55 (GPSGAGKS) is a binding site for ATP. The ABC transmembrane type-2 domain maps to 299 to 509 (TEISLLSSRF…ALDALLINEY (211 aa)). Transmembrane regions (helical) follow at residues 318–338 (LLLT…TIYL), 353–373 (LFAF…PIFI), 400–420 (VFLP…YFLV), 429–449 (LAYF…FVLF), 458–478 (IAGT…SGYF), 487–507 (YWLF…LLIN), and 548–568 (FNVY…FLVL).

The protein belongs to the ABC transporter superfamily. ABCG family. Eye pigment precursor importer (TC 3.A.1.204) subfamily.

The protein resides in the membrane. This is ABC transporter G family member 4 (ABCG4) from Arabidopsis thaliana (Mouse-ear cress).